We begin with the raw amino-acid sequence, 199 residues long: 3-isopropylmalate dehydratase small subunit (199 aa).

The protein belongs to the LeuD family. LeuD type 1 subfamily. In terms of assembly, heterodimer of LeuC and LeuD.

It catalyses the reaction (2R,3S)-3-isopropylmalate = (2S)-2-isopropylmalate. The protein operates within amino-acid biosynthesis; L-leucine biosynthesis; L-leucine from 3-methyl-2-oxobutanoate: step 2/4. In terms of biological role, catalyzes the isomerization between 2-isopropylmalate and 3-isopropylmalate, via the formation of 2-isopropylmaleate. The protein is 3-isopropylmalate dehydratase small subunit of Tolumonas auensis (strain DSM 9187 / NBRC 110442 / TA 4).